We begin with the raw amino-acid sequence, 331 residues long: Anthranilate phosphoribosyltransferase (331 aa).

5-phospho-alpha-D-ribose 1-diphosphate contacts are provided by residues Gly79, 82 to 83, Ser87, 89 to 92, 107 to 115, and Ser119; these read GD, NIST, and KHCNGNISS. Gly79 contributes to the anthranilate binding site. Ser91 contributes to the Mg(2+) binding site. Asn110 contacts anthranilate. Arg165 provides a ligand contact to anthranilate. Positions 223 and 224 each coordinate Mg(2+).

The protein belongs to the anthranilate phosphoribosyltransferase family. Homodimer. The cofactor is Mg(2+).

The catalysed reaction is N-(5-phospho-beta-D-ribosyl)anthranilate + diphosphate = 5-phospho-alpha-D-ribose 1-diphosphate + anthranilate. The protein operates within amino-acid biosynthesis; L-tryptophan biosynthesis; L-tryptophan from chorismate: step 2/5. In terms of biological role, catalyzes the transfer of the phosphoribosyl group of 5-phosphorylribose-1-pyrophosphate (PRPP) to anthranilate to yield N-(5'-phosphoribosyl)-anthranilate (PRA). This is Anthranilate phosphoribosyltransferase from Buchnera aphidicola subsp. Baizongia pistaciae (strain Bp).